The following is an 89-amino-acid chain: Putative sodium channel toxin Ts30 (89 aa).

A signal peptide spans 1–17 (MFKLAIILALLFFGARA). The LCN-type CS-alpha/beta domain occupies 21–85 (RDGYPILSDG…FGDSGTPECH (65 aa)). 4 disulfide bridges follow: Cys31-Cys84, Cys35-Cys59, Cys44-Cys64, and Cys48-Cys66.

In terms of tissue distribution, expressed by the venom gland.

It localises to the secreted. This Tityus serrulatus (Brazilian scorpion) protein is Putative sodium channel toxin Ts30.